The sequence spans 606 residues: MKLLGNSKYFFVVLLLCISVFLNGQEILDEIKYSEEVCNEQIDLHILLDGSGSIGHSNWISHVIPMLTTLVDNLNISRDEINISMTLFSTYARELVRLKRYGSTSKASLRFIIAQLQNNYSPHGTTNLTSALLNVDNLIQKKMNRPNAIQLVIILTDGIPNNLKKSTTVVNQLKKKDVNVAIIGVGAGVNNMFNRILVGCGKLGPCPYYSYGSWDQAQTMIKPFLSKVCQEVEKVALCGKWEEWSECSTTCDNGTKIRKRKVLHPNCAGEMTAPCKVRDCPPKPVAPPVIPIKVPDVPVKPVEPIEPAEPAEPAEPAEPAEPAEPAEPAEPAEPAEPAEPAEPAEPAEPAEPAEPAEPAEPAEPAKPAEPAEPAEPAEPAEPVNPDNPILPIKPEEPSGGAEPLNPEVENPFIIPDEPIEPIIAPGAVPDKPIIPEESNELPNNLPESPSDSQVEYPRPNDNGDNSNNTINSNKNIPNKHVPPTDDNPYKGQEERIPKPHRSNDEYIYYNNANNNDKLEPEIPSKDYEENKSKKQSKSNNGYKIAGGIIGGLAIIGCIGVGYNFIAGSSAAAMAGEAAPFEDVMADDEKGIVENEQFKLPEDNDWN.

An N-terminal signal peptide occupies residues 1-24 (MKLLGNSKYFFVVLLLCISVFLNG). Positions 43 to 228 (DLHILLDGSG…TMIKPFLSKV (186 aa)) constitute a VWFA domain. Positions 235–281 (VALCGKWEEWSECSTTCDNGTKIRKRKVLHPNCAGEMTAPCKVRDCP) constitute a TSP type-1 domain. Residues 301–541 (PVEPIEPAEP…SKKQSKSNNG (241 aa)) form a disordered region. 3 stretches are compositionally biased toward low complexity: residues 409–425 (ENPF…IIAP), 440–450 (ELPNNLPESPS), and 459–479 (PNDN…IPNK). Composition is skewed to basic and acidic residues over residues 487–504 (NPYK…RSND) and 516–532 (DKLE…ENKS). The helical transmembrane segment at 544 to 564 (IAGGIIGGLAIIGCIGVGYNF) threads the bilayer.

As to quaternary structure, interacts (via integrin-like A-domain) with Anopheles gambiae saglin/SG1F; the interaction probably promotes sporozoite invasion of salivary gland. Interacts (via integrin-like A-domain) with human AHSG; the interaction promotes sporozoite invasion of hepatocytes and formation of exoerythrocytic forms of parasites in human hepatoma HepG2 cells.

The protein localises to the cell membrane. It localises to the cytoplasm. Promotes parasite ability to invade host hepatocytes. Promotes parasite ability to invade mosquito salivary glands. Required for sporozoite gliding motility. This chain is Thrombospondin-related anonymous protein, found in Plasmodium berghei (strain Anka).